Here is a 204-residue protein sequence, read N- to C-terminus: uncharacterized protein (204 aa).

This is an uncharacterized protein from Stylonychia lemnae (Ciliate).